The following is a 355-amino-acid chain: dTDP-D-glucose 4,6-dehydratase (355 aa).

A substrate-binding site is contributed by threonine 142. The active-site Proton donor is the aspartate 143. Catalysis depends on proton acceptor residues glutamate 144 and tyrosine 166.

It belongs to the NAD(P)-dependent epimerase/dehydratase family. dTDP-glucose dehydratase subfamily. The cofactor is NAD(+).

The catalysed reaction is dTDP-alpha-D-glucose = dTDP-4-dehydro-6-deoxy-alpha-D-glucose + H2O. In Mus musculus (Mouse), this protein is dTDP-D-glucose 4,6-dehydratase (Tgds).